The sequence spans 512 residues: Glutathione-binding protein GsiB (512 aa).

The signal sequence occupies residues Met-1–Ala-26.

The protein belongs to the bacterial solute-binding protein 5 family. As to quaternary structure, the complex is composed of two ATP-binding proteins (GsiA), two transmembrane proteins (GsiC and GsiD) and a solute-binding protein (GsiB).

The protein localises to the periplasm. Its function is as follows. Part of the ABC transporter complex GsiABCD involved in glutathione import. Binds glutathione. The protein is Glutathione-binding protein GsiB of Escherichia coli O6:K15:H31 (strain 536 / UPEC).